We begin with the raw amino-acid sequence, 475 residues long: MSPQTETKASVGFKAGVKDYKLTYHTPDYETKDTDILAAFRVTPQPGVPPEEAGAAVAAESSTGTWTTVWTDGLTSLDRYKGRCYHIEPVAGEESQFIAYVAYPLDLFEEGSVTNMFTSIVGNVFGFKALRALRLEDLRIPPAYSKTFQGPPHGIQVERDKLNKYGRPLLGCTIKPKLGLSAKNYGRAVYECLRGGLDFTKDDENVNSQPFMRWRDRFLFCAEAIYKAQAETGEIKGHYLNATAGTCEEMMKRAIFARELGVPIVMHDYLTGGFTANTSLAHYCRDNGLLLHIHRAMHAVIDRQKNHGIHFRVLAKALRMSGGDHIHAGTVVGKLEGEREITLGFVDLLRDDYIEKDRSRGIYFTQDWVSLPGVLPVASGGIHVWHMPALTEIFGDDSVLQFGGGTLGHPWGNAPGAVANRVALEACVQARNEGRDLAREGNEIIREAAKWSPELAAACEVWKEIKFEFPAMDTL.

The propeptide occupies 1 to 2; that stretch reads MS. Position 3 is an N-acetylproline (Pro-3). Lys-14 carries the post-translational modification N6,N6,N6-trimethyllysine. The substrate site is built by Asn-123 and Thr-173. The active-site Proton acceptor is Lys-175. Lys-177 provides a ligand contact to substrate. Mg(2+) is bound by residues Lys-201, Asp-203, and Glu-204. Lys-201 carries the N6-carboxylysine modification. The active-site Proton acceptor is the His-294. Arg-295, His-327, and Ser-379 together coordinate substrate.

The protein belongs to the RuBisCO large chain family. Type I subfamily. In terms of assembly, heterohexadecamer of 8 large chains and 8 small chains; disulfide-linked. The disulfide link is formed within the large subunit homodimers. It depends on Mg(2+) as a cofactor. Post-translationally, the disulfide bond which can form in the large chain dimeric partners within the hexadecamer appears to be associated with oxidative stress and protein turnover.

The protein localises to the plastid. It localises to the chloroplast. It carries out the reaction 2 (2R)-3-phosphoglycerate + 2 H(+) = D-ribulose 1,5-bisphosphate + CO2 + H2O. It catalyses the reaction D-ribulose 1,5-bisphosphate + O2 = 2-phosphoglycolate + (2R)-3-phosphoglycerate + 2 H(+). In terms of biological role, ruBisCO catalyzes two reactions: the carboxylation of D-ribulose 1,5-bisphosphate, the primary event in carbon dioxide fixation, as well as the oxidative fragmentation of the pentose substrate in the photorespiration process. Both reactions occur simultaneously and in competition at the same active site. The polypeptide is Ribulose bisphosphate carboxylase large chain (Betula papyrifera (Paper birch)).